Here is a 418-residue protein sequence, read N- to C-terminus: tRNA-2-methylthio-N(6)-dimethylallyladenosine synthase (418 aa).

Residues 2 to 118 form the MTTase N-terminal domain; the sequence is PGYYLWTIGC…WREIPEGFIL (117 aa). The [4Fe-4S] cluster site is built by Cys11, Cys47, Cys81, Cys134, Cys138, and Cys141. One can recognise a Radical SAM core domain in the interval 120–351; sequence LRPPVSANVT…EDLQKETVGK (232 aa). A TRAM domain is found at 346 to 414; the sequence is KETVGKANAA…PWSLQAKLVN (69 aa).

It belongs to the methylthiotransferase family. MiaB subfamily. As to quaternary structure, monomer. It depends on [4Fe-4S] cluster as a cofactor.

The protein resides in the cytoplasm. The enzyme catalyses N(6)-dimethylallyladenosine(37) in tRNA + (sulfur carrier)-SH + AH2 + 2 S-adenosyl-L-methionine = 2-methylsulfanyl-N(6)-dimethylallyladenosine(37) in tRNA + (sulfur carrier)-H + 5'-deoxyadenosine + L-methionine + A + S-adenosyl-L-homocysteine + 2 H(+). Functionally, catalyzes the methylthiolation of N6-(dimethylallyl)adenosine (i(6)A), leading to the formation of 2-methylthio-N6-(dimethylallyl)adenosine (ms(2)i(6)A) at position 37 in tRNAs that read codons beginning with uridine. The protein is tRNA-2-methylthio-N(6)-dimethylallyladenosine synthase of Dehalococcoides mccartyi (strain CBDB1).